Reading from the N-terminus, the 701-residue chain is UvrABC system protein B (701 aa).

In terms of domain architecture, Helicase ATP-binding spans R28–L188. Residue G41–S48 coordinates ATP. The short motif at Y94–I117 is the Beta-hairpin element. Positions Q432–L598 constitute a Helicase C-terminal domain. The interval D606–A636 is disordered. The region spanning A656 to E691 is the UVR domain.

The protein belongs to the UvrB family. Forms a heterotetramer with UvrA during the search for lesions. Interacts with UvrC in an incision complex.

The protein localises to the cytoplasm. Functionally, the UvrABC repair system catalyzes the recognition and processing of DNA lesions. A damage recognition complex composed of 2 UvrA and 2 UvrB subunits scans DNA for abnormalities. Upon binding of the UvrA(2)B(2) complex to a putative damaged site, the DNA wraps around one UvrB monomer. DNA wrap is dependent on ATP binding by UvrB and probably causes local melting of the DNA helix, facilitating insertion of UvrB beta-hairpin between the DNA strands. Then UvrB probes one DNA strand for the presence of a lesion. If a lesion is found the UvrA subunits dissociate and the UvrB-DNA preincision complex is formed. This complex is subsequently bound by UvrC and the second UvrB is released. If no lesion is found, the DNA wraps around the other UvrB subunit that will check the other stand for damage. This Mycobacterium ulcerans (strain Agy99) protein is UvrABC system protein B.